The primary structure comprises 299 residues: Protease HtpX homolog (299 aa).

Transmembrane regions (helical) follow at residues 15–35 (ILLLVFFLLLALVGYAVGYLF) and 39–59 (GLGGLVIALIIGFIYALSMIF). H143 is a Zn(2+) binding site. The active site involves E144. H147 provides a ligand contact to Zn(2+). 2 helical membrane-spanning segments follow: residues 158-178 (IAVALVSAITMLSGMAGRMMW) and 198-218 (IIMLVVSLLAIVLAPLAATLV). A Zn(2+)-binding site is contributed by E227.

Belongs to the peptidase M48B family. Zn(2+) is required as a cofactor.

It localises to the cell membrane. The chain is Protease HtpX homolog from Streptococcus pneumoniae (strain Hungary19A-6).